We begin with the raw amino-acid sequence, 209 residues long: V-type ATP synthase subunit D (209 aa).

Belongs to the V-ATPase D subunit family.

Functionally, produces ATP from ADP in the presence of a proton gradient across the membrane. This Anaeromyxobacter dehalogenans (strain 2CP-1 / ATCC BAA-258) protein is V-type ATP synthase subunit D.